Consider the following 186-residue polypeptide: UPF0398 protein LBUL_0921 (186 aa).

This sequence belongs to the UPF0398 family.

This Lactobacillus delbrueckii subsp. bulgaricus (strain ATCC BAA-365 / Lb-18) protein is UPF0398 protein LBUL_0921.